The sequence spans 274 residues: Large ribosomal subunit protein uL2cz/uL2cy (274 aa).

Disordered regions lie at residues 1–25 (MAIH…VKSN) and 223–274 (MNPV…RRTK).

It belongs to the universal ribosomal protein uL2 family. Part of the 50S ribosomal subunit.

The protein localises to the plastid. It localises to the chloroplast. This is Large ribosomal subunit protein uL2cz/uL2cy (rpl2-A) from Citrus sinensis (Sweet orange).